The sequence spans 465 residues: uncharacterized protein (465 aa).

The segment covering 87 to 112 has biased composition (polar residues); that stretch reads KTSQQIDSSPPQTPTTSNGSMMTRRQ. Disordered stretches follow at residues 87 to 169 and 201 to 244; these read KTSQ…SYDD and EGYI…NNIF. A compositionally biased stretch (low complexity) spans 113-139; it reads NANNAISSNNNTNTNVTNGSSSNTSLN. A compositionally biased stretch (acidic residues) spans 141–157; that stretch reads GDEEQEEEEEEENDEDS. The span at 217–244 shows a compositional bias: low complexity; it reads NRNNNNNNINKNNNNNINNNNNNNNNIF.

This is an uncharacterized protein from Dictyostelium discoideum (Social amoeba).